A 159-amino-acid polypeptide reads, in one-letter code: Protein-export protein SecB (159 aa).

The protein belongs to the SecB family. In terms of assembly, homotetramer, a dimer of dimers. One homotetramer interacts with 1 SecA dimer.

It is found in the cytoplasm. In terms of biological role, one of the proteins required for the normal export of preproteins out of the cell cytoplasm. It is a molecular chaperone that binds to a subset of precursor proteins, maintaining them in a translocation-competent state. It also specifically binds to its receptor SecA. The sequence is that of Protein-export protein SecB from Aromatoleum aromaticum (strain DSM 19018 / LMG 30748 / EbN1) (Azoarcus sp. (strain EbN1)).